Consider the following 681-residue polypeptide: Serine/threonine-protein kinase PAK 6 (681 aa).

Disordered regions lie at residues 1 to 30, 149 to 169, 200 to 256, and 268 to 355; these read MFRK…DPKE, GGTP…PRVL, QSSP…ESSL, and TAAT…PRTW. The CRIB domain maps to 12–25; it reads ISAPQNFQHRVHTS. The segment at 26–406 is linker; it reads FDPKEGKFVG…VVDQGDPRLL (381 aa). 2 stretches are compositionally biased toward low complexity: residues 201-212 and 268-278; these read SSPPGASPPTGT and TAATAPPSSSK. Residues 308–333 show a composition bias toward polar residues; the sequence is SLPSDQPVGTFSPLTTSDTSSPQKSL. Positions 407–658 constitute a Protein kinase domain; the sequence is LDSYVKIGEG…AQELLDHPFL (252 aa). Residues 413–421 and lysine 436 each bind ATP; that span reads IGEGSTGIV. Aspartate 526 (proton acceptor) is an active-site residue. At serine 560 the chain carries Phosphoserine; by autocatalysis.

Belongs to the protein kinase superfamily. STE Ser/Thr protein kinase family. STE20 subfamily. In terms of assembly, interacts tightly with GTP-bound but not GDP-bound CDC42/p21 and RAC1. Interacts with the androgen receptor AR and the estrogen receptor ESR1. Interacts with IQGAP1 and PPM1B. Autophosphorylated. Phosphorylated by MAP2K6//MAPKK6, leading to PAK6 activation. Selectively expressed in brain and testis, with lower levels in multiple tissues including prostate and breast.

It localises to the cytoplasm. It is found in the nucleus. The catalysed reaction is L-seryl-[protein] + ATP = O-phospho-L-seryl-[protein] + ADP + H(+). The enzyme catalyses L-threonyl-[protein] + ATP = O-phospho-L-threonyl-[protein] + ADP + H(+). In terms of biological role, serine/threonine protein kinase that plays a role in the regulation of gene transcription. The kinase activity is induced by various effectors including AR or MAP2K6/MAPKK6. Phosphorylates the DNA-binding domain of androgen receptor/AR and thereby inhibits AR-mediated transcription. Also inhibits ESR1-mediated transcription. May play a role in cytoskeleton regulation by interacting with IQGAP1. May protect cells from apoptosis through phosphorylation of BAD. This is Serine/threonine-protein kinase PAK 6 (PAK6) from Homo sapiens (Human).